Here is a 604-residue protein sequence, read N- to C-terminus: Inactive all-trans-retinol 13,14-reductase (604 aa).

An N-terminal signal peptide occupies residues 1–17 (MWWILLFLEWFVDWARG).

This sequence belongs to the carotenoid/retinoid oxidoreductase family. CrtISO subfamily.

This chain is Inactive all-trans-retinol 13,14-reductase (retsatl), found in Danio rerio (Zebrafish).